Here is a 101-residue protein sequence, read N- to C-terminus: Small ribosomal subunit protein uS14 (101 aa).

Positions 33 to 69 (SQDASYEEKIDASTKLQKLPRDSSPSRHRNRCELSGR) are disordered. A compositionally biased stretch (basic and acidic residues) spans 51-68 (LPRDSSPSRHRNRCELSG).

The protein belongs to the universal ribosomal protein uS14 family. As to quaternary structure, part of the 30S ribosomal subunit. Contacts proteins S3 and S10.

In terms of biological role, binds 16S rRNA, required for the assembly of 30S particles and may also be responsible for determining the conformation of the 16S rRNA at the A site. The protein is Small ribosomal subunit protein uS14 of Xanthomonas axonopodis pv. citri (strain 306).